Reading from the N-terminus, the 643-residue chain is MMLGGKSSAGGRTSLRVAVAGDKGTGKSSLISAVASETFPDNVPRVLPPITLPADAFPDYIPITIVDTPSSIDNRIKLIEEFRKADVVLLTYACDQPSTLDRLSSYWLPELRRLEIKAPVIVVGCKLDLRDERSPARLEDIMSPIMKEYREIETCIECSALTLIQVPDVFYFASKAVLHPTFPLFDQEKQCLKPRLRRAVQRIFNLCDHDLDGALNDAELNDFQVNCFGAPLDPVELMGVKKVVQERQPDGVTDLGLTLPGFLFLFSLFIERGRPETAWAILRKCGYNDSLELHAELLPVPAKQSPDQSIELTNEAMDFLSGIFQLYDLDNDGALQPAELDDLFQTAPDSPWLEDPYKEAAEKTPGGSLTINGFLSEWALMTLLDPRKSLANLTYIGYGHDPASTFSVTRKRSVDRKKQRTERNVFQCFVFGPKKSGKSALLDSFLGRKFSNSYKATMGERYAANVIDQPGGSKKTLILREIPEDRVKKFLTNKESLAACDVAVVVYDSSDVYSWRKAREILMEVARRGEERGYGTPCLLVAAKDDLDPYPMSVQESDRVCMELGIDIPVSLSMKLGEPNSLFSRIVSTAENPHMSIPETESGRRSRNIRQLVNSSLLFVSVGTAVGFAGLAAYRAYSARKNA.

Residues 1-611 lie on the Cytoplasmic side of the membrane; sequence MMLGGKSSAG…SGRRSRNIRQ (611 aa). A Miro 1 domain is found at 12–179; it reads RTSLRVAVAG…FYFASKAVLH (168 aa). EF-hand domains follow at residues 195–230 and 315–350; these read RLRR…CFGA and EAMD…APDS. Asp208, Asp210, Asp212, Glu219, Asp328, Asp330, Asp332, and Glu339 together coordinate Ca(2+). Positions 423-592 constitute a Miro 2 domain; that stretch reads RNVFQCFVFG…FSRIVSTAEN (170 aa). The chain crosses the membrane as a helical span at residues 612–632; the sequence is LVNSSLLFVSVGTAVGFAGLA. At 633–643 the chain is on the mitochondrial intermembrane side; it reads AYRAYSARKNA.

It belongs to the mitochondrial Rho GTPase family. Expressed roots, rosette and cauline leaves, stems, flowers and siliques.

The protein localises to the mitochondrion outer membrane. With respect to regulation, activated by calcium. Calcium-binding mitochondrial GTPase involved in calcium signaling during salt stress response. May play a role in the progression of embryonic cell division, development of haploid male and female gametes, and pollen tube growth. The sequence is that of Mitochondrial Rho GTPase 2 from Arabidopsis thaliana (Mouse-ear cress).